A 195-amino-acid polypeptide reads, in one-letter code: ATP-dependent Clp protease proteolytic subunit 3 (195 aa).

The active-site Nucleophile is the S97. H122 is an active-site residue.

It belongs to the peptidase S14 family. As to quaternary structure, fourteen ClpP subunits assemble into 2 heptameric rings which stack back to back to give a disk-like structure with a central cavity, resembling the structure of eukaryotic proteasomes.

The protein localises to the cytoplasm. It carries out the reaction Hydrolysis of proteins to small peptides in the presence of ATP and magnesium. alpha-casein is the usual test substrate. In the absence of ATP, only oligopeptides shorter than five residues are hydrolyzed (such as succinyl-Leu-Tyr-|-NHMec, and Leu-Tyr-Leu-|-Tyr-Trp, in which cleavage of the -Tyr-|-Leu- and -Tyr-|-Trp bonds also occurs).. Functionally, cleaves peptides in various proteins in a process that requires ATP hydrolysis. Has a chymotrypsin-like activity. Plays a major role in the degradation of misfolded proteins. This chain is ATP-dependent Clp protease proteolytic subunit 3, found in Rhizobium meliloti (strain 1021) (Ensifer meliloti).